The sequence spans 332 residues: Invasin IpaD (332 aa).

The span at 1 to 25 (MNITTLTNSISTSSFSPNNTNGSST) shows a compositional bias: low complexity. Positions 1 to 43 (MNITTLTNSISTSSFSPNNTNGSSTETVNSDIKTTTSSHPVSS) are disordered. Polar residues predominate over residues 26–43 (ETVNSDIKTTTSSHPVSS). Residues 44 to 77 (LTMLNDTLHNIRTTNQALKKELSQKTLTKTSLEE) are a coiled coil. The interval 192-267 (VNSLKKALEE…KSLDNLGGNG (76 aa)) is ipaB binding.

Belongs to the invasin protein D family.

It is found in the secreted. Its function is as follows. Required for bacterial invasion of host cells. Controls IpaB and IpaC secretion, and the efficiency with which they are physically inserted into target cell membranes. These proteins are exported via T3SS to form a pore in the host membrane that allows the translocation of the other effectors into the host cytoplasm. Along with IpaB, is essential for both blocking secretion through the Mxi/Spa translocon in the absence of a secretion-inducing signal, and for controlling the level of secretion in the presence of this signal. The chain is Invasin IpaD (ipaD) from Shigella flexneri.